Reading from the N-terminus, the 238-residue chain is 1-(5-phosphoribosyl)-5-[(5-phosphoribosylamino)methylideneamino] imidazole-4-carboxamide isomerase (238 aa).

The active-site Proton acceptor is D8. D129 functions as the Proton donor in the catalytic mechanism.

This sequence belongs to the HisA/HisF family.

It is found in the cytoplasm. The catalysed reaction is 1-(5-phospho-beta-D-ribosyl)-5-[(5-phospho-beta-D-ribosylamino)methylideneamino]imidazole-4-carboxamide = 5-[(5-phospho-1-deoxy-D-ribulos-1-ylimino)methylamino]-1-(5-phospho-beta-D-ribosyl)imidazole-4-carboxamide. The protein operates within amino-acid biosynthesis; L-histidine biosynthesis; L-histidine from 5-phospho-alpha-D-ribose 1-diphosphate: step 4/9. This chain is 1-(5-phosphoribosyl)-5-[(5-phosphoribosylamino)methylideneamino] imidazole-4-carboxamide isomerase, found in Myxococcus xanthus (strain DK1622).